Here is a 102-residue protein sequence, read N- to C-terminus: Thioredoxin (102 aa).

The Thioredoxin domain occupies 2–102; the sequence is VTEIRSLKQL…KTKIIDLFNN (101 aa). A disulfide bridge connects residues cysteine 30 and cysteine 33.

This sequence belongs to the thioredoxin family.

In terms of biological role, participates in various redox reactions through the reversible oxidation of its active center dithiol to a disulfide and catalyzes dithiol-disulfide exchange reactions. In Mycoplasma genitalium (strain ATCC 33530 / DSM 19775 / NCTC 10195 / G37) (Mycoplasmoides genitalium), this protein is Thioredoxin (trxA).